Consider the following 208-residue polypeptide: U11/U12 small nuclear ribonucleoprotein 35 kDa protein (208 aa).

Positions 50–128 (LTLFVARLNP…YELLVDVEQE (79 aa)) constitute an RRM domain. The interval 133-208 (GWRPRRLGGG…TEDRTHRHTY (76 aa)) is disordered. Positions 171–208 (RPAEPRGRETERERDRRDYRDRRHERTHTEDRTHRHTY) are enriched in basic and acidic residues.

The protein localises to the nucleus. The sequence is that of U11/U12 small nuclear ribonucleoprotein 35 kDa protein (snrnp35) from Danio rerio (Zebrafish).